The primary structure comprises 324 residues: Beta-ketoacyl-[acyl-carrier-protein] synthase III (324 aa).

Residues cysteine 113 and histidine 251 contribute to the active site. The tract at residues 252 to 256 (QANKR) is ACP-binding. Asparagine 281 is an active-site residue.

The protein belongs to the thiolase-like superfamily. FabH family. As to quaternary structure, homodimer.

Its subcellular location is the cytoplasm. It carries out the reaction malonyl-[ACP] + acetyl-CoA + H(+) = 3-oxobutanoyl-[ACP] + CO2 + CoA. It participates in lipid metabolism; fatty acid biosynthesis. In terms of biological role, catalyzes the condensation reaction of fatty acid synthesis by the addition to an acyl acceptor of two carbons from malonyl-ACP. Catalyzes the first condensation reaction which initiates fatty acid synthesis and may therefore play a role in governing the total rate of fatty acid production. Possesses both acetoacetyl-ACP synthase and acetyl transacylase activities. Its substrate specificity determines the biosynthesis of branched-chain and/or straight-chain of fatty acids. The polypeptide is Beta-ketoacyl-[acyl-carrier-protein] synthase III (Bartonella tribocorum (strain CIP 105476 / IBS 506)).